The primary structure comprises 198 residues: NAD(P)H dehydrogenase (quinone) (198 aa).

Residues 4-189 form the Flavodoxin-like domain; the sequence is ILVLYYSMYG…AIARYQGEHV (186 aa). Residues 10–15 and 78–80 contribute to the FMN site; these read SMYGHI and TRF. Tyr12 serves as a coordination point for NAD(+). Position 98 (Trp98) interacts with substrate. Residues 113–118 and His133 contribute to the FMN site; that span reads STGTGG.

The protein belongs to the WrbA family. FMN serves as cofactor.

It catalyses the reaction a quinone + NADH + H(+) = a quinol + NAD(+). The catalysed reaction is a quinone + NADPH + H(+) = a quinol + NADP(+). This is NAD(P)H dehydrogenase (quinone) from Klebsiella pneumoniae (strain 342).